A 169-amino-acid chain; its full sequence is NADH-quinone oxidoreductase subunit B (169 aa).

Residues Cys42, Cys43, Cys107, and Cys136 each coordinate [4Fe-4S] cluster.

It belongs to the complex I 20 kDa subunit family. As to quaternary structure, NDH-1 is composed of 14 different subunits. Subunits NuoB, C, D, E, F, and G constitute the peripheral sector of the complex. It depends on [4Fe-4S] cluster as a cofactor.

It is found in the cell inner membrane. It carries out the reaction a quinone + NADH + 5 H(+)(in) = a quinol + NAD(+) + 4 H(+)(out). Its function is as follows. NDH-1 shuttles electrons from NADH, via FMN and iron-sulfur (Fe-S) centers, to quinones in the respiratory chain. The immediate electron acceptor for the enzyme in this species is believed to be ubiquinone. Couples the redox reaction to proton translocation (for every two electrons transferred, four hydrogen ions are translocated across the cytoplasmic membrane), and thus conserves the redox energy in a proton gradient. This is NADH-quinone oxidoreductase subunit B from Nitratiruptor sp. (strain SB155-2).